Reading from the N-terminus, the 161-residue chain is Phosphopantetheine adenylyltransferase (161 aa).

Ser11 contacts substrate. ATP contacts are provided by residues 11–12 (SF) and His19. Substrate contacts are provided by Lys43, Leu75, and Arg89. Residues 90–92 (GLR), Glu100, and 125–131 (YSFISSS) contribute to the ATP site.

Belongs to the bacterial CoaD family. As to quaternary structure, homohexamer. Requires Mg(2+) as cofactor.

It is found in the cytoplasm. The catalysed reaction is (R)-4'-phosphopantetheine + ATP + H(+) = 3'-dephospho-CoA + diphosphate. The protein operates within cofactor biosynthesis; coenzyme A biosynthesis; CoA from (R)-pantothenate: step 4/5. Reversibly transfers an adenylyl group from ATP to 4'-phosphopantetheine, yielding dephospho-CoA (dPCoA) and pyrophosphate. In Staphylococcus saprophyticus subsp. saprophyticus (strain ATCC 15305 / DSM 20229 / NCIMB 8711 / NCTC 7292 / S-41), this protein is Phosphopantetheine adenylyltransferase.